A 589-amino-acid chain; its full sequence is Putative phospholipase B-like 2 (589 aa).

The N-terminal stretch at 1-41 is a signal peptide; that stretch reads MVAPMYGSPGGRLARAVTRALALALVLALLVGLFLSGLTGA. N-linked (GlcNAc...) asparagine glycosylation is found at asparagine 88 and asparagine 110. Cysteine 142 and cysteine 152 are joined by a disulfide. N-linked (GlcNAc...) asparagine glycans are attached at residues asparagine 174, asparagine 231, asparagine 436, and asparagine 465. The cysteines at positions 492 and 495 are disulfide-linked. The N-linked (GlcNAc...) asparagine glycan is linked to asparagine 515.

The protein belongs to the phospholipase B-like family. Interacts with IGF2R. In terms of processing, glycosylated; contains mannose 6-phosphate sugars.

It localises to the lysosome lumen. In terms of biological role, putative phospholipase. This Bos taurus (Bovine) protein is Putative phospholipase B-like 2 (PLBD2).